The sequence spans 178 residues: MKANPPLAWHPVPVSAPVNLRWWLMHQESLTRLLQAHCEHFRVEPVFQTLATACIDELEVMNLRRQNQVLVREVYLRCNETPVVFAHSIVKKEHLRGAWRGLSRLGNRSLGTMLFTNPLIQRTPLAFKKLKPHHPLFERACKQLQMRPINLWARRSLFILLRQPILVTEVFLPAIHQL.

Substrate is bound by residues Arg72, Leu110, and Glu169.

Belongs to the UbiC family.

It is found in the cytoplasm. It carries out the reaction chorismate = 4-hydroxybenzoate + pyruvate. It functions in the pathway cofactor biosynthesis; ubiquinone biosynthesis. Functionally, removes the pyruvyl group from chorismate, with concomitant aromatization of the ring, to provide 4-hydroxybenzoate (4HB) for the ubiquinone pathway. This is Probable chorismate pyruvate-lyase from Nitrosomonas eutropha (strain DSM 101675 / C91 / Nm57).